Consider the following 204-residue polypeptide: UPF0056 membrane protein TC_0241 (204 aa).

6 consecutive transmembrane segments (helical) span residues 8–28, 46–66, 68–88, 107–127, 138–158, and 176–196; these read LTLL…FVAL, IFAL…FRLL, VSLP…AINM, IFYP…STLG, LVLG…FFSS, and FGIS…STAF.

It belongs to the UPF0056 (MarC) family.

Its subcellular location is the cell membrane. The sequence is that of UPF0056 membrane protein TC_0241 from Chlamydia muridarum (strain MoPn / Nigg).